Consider the following 294-residue polypeptide: MSNLKEIKRKIKSVHNTQKTTNAMKLVSTAKLKKAEEAAKRSKIYAQKIDEILSEISFQINKIVHNEDDVRLSLFHKKEQIKTVDLIFITADKGLCGGFNIKTLKAVSEMLKEYEAKNINIRLRAIGKTGIEYFNFQKIELLEKYFHLSSSPDYEKACEVIHAAVDDFLNGNTDEVILVHNGYKNMITQELKINHLIPVEPKSIEQTHNSLLELEPEGTELLEDLMKTYFEYNMYYALIDSLAAEHSARMQAMDNATNNAKARVKQLNLAYNKARQESITTELIEIISGVESMK.

This sequence belongs to the ATPase gamma chain family. As to quaternary structure, F-type ATPases have 2 components, CF(1) - the catalytic core - and CF(0) - the membrane proton channel. CF(1) has five subunits: alpha(3), beta(3), gamma(1), delta(1), epsilon(1). CF(0) has three main subunits: a, b and c.

It localises to the cell inner membrane. Functionally, produces ATP from ADP in the presence of a proton gradient across the membrane. The gamma chain is believed to be important in regulating ATPase activity and the flow of protons through the CF(0) complex. The sequence is that of ATP synthase gamma chain from Campylobacter jejuni subsp. jejuni serotype O:6 (strain 81116 / NCTC 11828).